The chain runs to 398 residues: Methionine import ATP-binding protein MetN 2 (398 aa).

One can recognise an ABC transporter domain in the interval 43–282; sequence VSLEQVGKVF…PRHGATRALL (240 aa). An ATP-binding site is contributed by 79-86; the sequence is GRSGAGKS.

It belongs to the ABC transporter superfamily. Methionine importer (TC 3.A.1.24) family. In terms of assembly, the complex is composed of two ATP-binding proteins (MetN), two transmembrane proteins (MetI) and a solute-binding protein (MetQ).

The protein localises to the cell inner membrane. The catalysed reaction is L-methionine(out) + ATP + H2O = L-methionine(in) + ADP + phosphate + H(+). It carries out the reaction D-methionine(out) + ATP + H2O = D-methionine(in) + ADP + phosphate + H(+). In terms of biological role, part of the ABC transporter complex MetNIQ involved in methionine import. Responsible for energy coupling to the transport system. This chain is Methionine import ATP-binding protein MetN 2, found in Burkholderia lata (strain ATCC 17760 / DSM 23089 / LMG 22485 / NCIMB 9086 / R18194 / 383).